We begin with the raw amino-acid sequence, 379 residues long: Chaperone protein DnaJ 2 (379 aa).

The J domain occupies 4–68 (DYYAVLGVRR…QKKQVYDLGG (65 aa)). A CR-type zinc finger spans residues 130-212 (GTTKDIQVDT…CAGDGRVPSR (83 aa)). The Zn(2+) site is built by Cys143, Cys146, Cys160, Cys163, Cys186, Cys189, Cys200, and Cys203. CXXCXGXG motif repeat units follow at residues 143 to 150 (CNTCNGEG), 160 to 167 (CDMCRGRG), 186 to 193 (CPQCQGFA), and 200 to 207 (CPECAGDG). Residues 351 to 379 (RGEERPTGQFQPGQQGLFSRLKDAFNGRS) form a disordered region. A compositionally biased stretch (polar residues) spans 358–367 (GQFQPGQQGL). A compositionally biased stretch (basic and acidic residues) spans 370–379 (RLKDAFNGRS).

Belongs to the DnaJ family. In terms of assembly, homodimer. Zn(2+) is required as a cofactor.

The protein resides in the cytoplasm. Its function is as follows. Participates actively in the response to hyperosmotic and heat shock by preventing the aggregation of stress-denatured proteins and by disaggregating proteins, also in an autonomous, DnaK-independent fashion. Unfolded proteins bind initially to DnaJ; upon interaction with the DnaJ-bound protein, DnaK hydrolyzes its bound ATP, resulting in the formation of a stable complex. GrpE releases ADP from DnaK; ATP binding to DnaK triggers the release of the substrate protein, thus completing the reaction cycle. Several rounds of ATP-dependent interactions between DnaJ, DnaK and GrpE are required for fully efficient folding. Also involved, together with DnaK and GrpE, in the DNA replication of plasmids through activation of initiation proteins. In Streptomyces albus G, this protein is Chaperone protein DnaJ 2.